The following is a 234-amino-acid chain: Sugar fermentation stimulation protein A (234 aa).

The segment at residues 201–220 (LLSEAQQRGVEILAYKAEIS) is a DNA-binding region (H-T-H motif).

Belongs to the SfsA family.

Its function is as follows. Binds to DNA non-specifically. Could be a regulatory factor involved in maltose metabolism. This Shigella dysenteriae serotype 1 (strain Sd197) protein is Sugar fermentation stimulation protein A.